Consider the following 246-residue polypeptide: 23S rRNA (guanosine-2'-O-)-methyltransferase RlmB (246 aa).

3 residues coordinate S-adenosyl-L-methionine: glycine 197, isoleucine 217, and leucine 226.

It belongs to the class IV-like SAM-binding methyltransferase superfamily. RNA methyltransferase TrmH family. RlmB subfamily.

It localises to the cytoplasm. It catalyses the reaction guanosine(2251) in 23S rRNA + S-adenosyl-L-methionine = 2'-O-methylguanosine(2251) in 23S rRNA + S-adenosyl-L-homocysteine + H(+). Its function is as follows. Specifically methylates the ribose of guanosine 2251 in 23S rRNA. This Haemophilus influenzae (strain ATCC 51907 / DSM 11121 / KW20 / Rd) protein is 23S rRNA (guanosine-2'-O-)-methyltransferase RlmB.